Reading from the N-terminus, the 108-residue chain is Small ribosomal subunit protein eS25 (108 aa).

Residues 1-36 (MAPKKAQAPPPSSKPAKSGGGKQKKKKWSKGKQKEK) form a disordered region. The segment covering 22–31 (KQKKKKWSKG) has biased composition (basic residues).

This sequence belongs to the eukaryotic ribosomal protein eS25 family.

This Solanum lycopersicum (Tomato) protein is Small ribosomal subunit protein eS25 (RPS25).